The chain runs to 572 residues: Urease subunit alpha (572 aa).

One can recognise a Urease domain in the interval 130 to 572 (GGVDTHIHFI…LPMAQRYFLF (443 aa)). His135, His137, and Lys218 together coordinate Ni(2+). At Lys218 the chain carries N6-carboxylysine. Residue His220 participates in substrate binding. 2 residues coordinate Ni(2+): His247 and His273. His321 functions as the Proton donor in the catalytic mechanism. Asp361 contacts Ni(2+).

This sequence belongs to the metallo-dependent hydrolases superfamily. Urease alpha subunit family. In terms of assembly, heterotrimer of UreA (gamma), UreB (beta) and UreC (alpha) subunits. Three heterotrimers associate to form the active enzyme. Requires Ni cation as cofactor. Carboxylation allows a single lysine to coordinate two nickel ions.

It is found in the cytoplasm. The enzyme catalyses urea + 2 H2O + H(+) = hydrogencarbonate + 2 NH4(+). Its pathway is nitrogen metabolism; urea degradation; CO(2) and NH(3) from urea (urease route): step 1/1. This is Urease subunit alpha from Ralstonia nicotianae (strain ATCC BAA-1114 / GMI1000) (Ralstonia solanacearum).